The following is a 238-amino-acid chain: Ribonuclease PH (238 aa).

Residues arginine 86 and 124-126 (GTR) contribute to the phosphate site.

This sequence belongs to the RNase PH family. As to quaternary structure, homohexameric ring arranged as a trimer of dimers.

The enzyme catalyses tRNA(n+1) + phosphate = tRNA(n) + a ribonucleoside 5'-diphosphate. Functionally, phosphorolytic 3'-5' exoribonuclease that plays an important role in tRNA 3'-end maturation. Removes nucleotide residues following the 3'-CCA terminus of tRNAs; can also add nucleotides to the ends of RNA molecules by using nucleoside diphosphates as substrates, but this may not be physiologically important. Probably plays a role in initiation of 16S rRNA degradation (leading to ribosome degradation) during starvation. The protein is Ribonuclease PH of Nitrosospira multiformis (strain ATCC 25196 / NCIMB 11849 / C 71).